The primary structure comprises 208 residues: Imidazoleglycerol-phosphate dehydratase (208 aa).

The tract at residues 1-20 is disordered; that stretch reads MSRRATVKAPRAGAAARRGA. Residues 7–19 are compositionally biased toward low complexity; sequence VKAPRAGAAARRG.

Belongs to the imidazoleglycerol-phosphate dehydratase family.

Its subcellular location is the cytoplasm. It catalyses the reaction D-erythro-1-(imidazol-4-yl)glycerol 3-phosphate = 3-(imidazol-4-yl)-2-oxopropyl phosphate + H2O. It participates in amino-acid biosynthesis; L-histidine biosynthesis; L-histidine from 5-phospho-alpha-D-ribose 1-diphosphate: step 6/9. The chain is Imidazoleglycerol-phosphate dehydratase from Anaeromyxobacter sp. (strain K).